The sequence spans 479 residues: Glutamyl-tRNA reductase (479 aa).

Substrate-binding positions include 48-51, S104, 109-111, and Q115; these read TCNR and ERQ. Residue C49 is the Nucleophile of the active site. 189–194 lines the NADP(+) pocket; the sequence is GAGKMG. Residues 417 to 455 form a disordered region; it reads DAGRSLAEAPDADTPDLGEAPSRCPYMTHDPGGDGTETE.

The protein belongs to the glutamyl-tRNA reductase family. Homodimer.

The catalysed reaction is (S)-4-amino-5-oxopentanoate + tRNA(Glu) + NADP(+) = L-glutamyl-tRNA(Glu) + NADPH + H(+). The protein operates within porphyrin-containing compound metabolism; protoporphyrin-IX biosynthesis; 5-aminolevulinate from L-glutamyl-tRNA(Glu): step 1/2. Catalyzes the NADPH-dependent reduction of glutamyl-tRNA(Glu) to glutamate 1-semialdehyde (GSA). The protein is Glutamyl-tRNA reductase of Salinibacter ruber (strain DSM 13855 / M31).